The chain runs to 130 residues: C-type natriuretic peptide 2 (130 aa).

An N-terminal signal peptide occupies residues 1-22 (MAASSSSFVPLVLLFLAIPVEP). Residues 23 to 103 (RPSMTRDEAQ…LQQQSKTTRR (81 aa)) constitute a propeptide that is removed on maturation. Positions 57 to 77 (ELLPRRPGPPRSFGASPGALR) are disordered. Cysteines 114 and 130 form a disulfide.

The protein belongs to the natriuretic peptide family.

It localises to the secreted. Its function is as follows. Exhibits natriuretic and vasodepressant activity. Has cGMP-stimulating activity. May help to regulate body fluid homeostasis in a variety of aquatic environments. This Takifugu rubripes (Japanese pufferfish) protein is C-type natriuretic peptide 2.